We begin with the raw amino-acid sequence, 485 residues long: NADH-quinone oxidoreductase subunit N (485 aa).

The next 14 membrane-spanning stretches (helical) occupy residues 8–28, 35–55, 71–91, 105–125, 127–147, 159–179, 203–223, 235–255, 271–291, 297–317, 326–346, 373–393, 408–430, and 455–475; these read LIALLPLLIVGLTVVVVMLSI, FLNATLSVIGLNAALVSLWFV, GFAMLYTGLVLLASLATCTFA, FYLLVLIAALGGILLANANHL, SLFLGIELISLPLFGLVGYAF, YTILSAAASSFLLFGMALVYA, LLAGFGLMIVGLGFKLSLVPF, PAPVSTFLATASKIAIFGVVM, VVLAIIAFASIIFGNLMALSQ, LLGYSSISHLGYLLVALIALQ, VGVYLAGYLFSSLGAFGVVSL, AAVMTVMMLSLAGIPMTLGFI, WWLVGAVVVGSAIGLYYYLRVAV, and IVVLISALLVLVLGIWPQPLI.

Belongs to the complex I subunit 2 family. As to quaternary structure, NDH-1 is composed of 13 different subunits. Subunits NuoA, H, J, K, L, M, N constitute the membrane sector of the complex.

It is found in the cell inner membrane. The catalysed reaction is a quinone + NADH + 5 H(+)(in) = a quinol + NAD(+) + 4 H(+)(out). Its function is as follows. NDH-1 shuttles electrons from NADH, via FMN and iron-sulfur (Fe-S) centers, to quinones in the respiratory chain. The immediate electron acceptor for the enzyme in this species is believed to be ubiquinone. Couples the redox reaction to proton translocation (for every two electrons transferred, four hydrogen ions are translocated across the cytoplasmic membrane), and thus conserves the redox energy in a proton gradient. This is NADH-quinone oxidoreductase subunit N from Escherichia coli O7:K1 (strain IAI39 / ExPEC).